A 1029-amino-acid polypeptide reads, in one-letter code: Sodium/potassium-transporting ATPase subunit alpha-4 (1029 aa).

The interval 1–37 (MGLWGKKGTVAPHDQSPRRRPKKGLIKKKMVKREKQK) is disordered. The Cytoplasmic portion of the chain corresponds to 1–95 (MGLWGKKGTV…NTVTPPPTTP (95 aa)). The span at 18–36 (RRRPKKGLIKKKMVKREKQ) shows a compositional bias: basic residues. The interaction with phosphoinositide-3 kinase stretch occupies residues 90–92 (PPP). A helical transmembrane segment spans residues 96–116 (EWVKFCKQLFGGFSLLLWTGA). Residues 117 to 139 (ILCFVAYSIQIYFNEEPTKDNLY) are Extracellular-facing. A helical membrane pass occupies residues 140–160 (LSIVLSVVVIVTGCFSYYQEA). Topologically, residues 161–296 (KSSKIMESFK…VGQTPIAAEI (136 aa)) are cytoplasmic. A compositionally biased stretch (polar residues) spans 223–237 (NSSLTGESEPQSRSP). Residues 223–242 (NSSLTGESEPQSRSPDFTHE) form a disordered region. A helical membrane pass occupies residues 297-316 (EHFIHLITVVAVFLGVTFFA). The Extracellular portion of the chain corresponds to 317 to 328 (LSLLLGYGWLEA). Residues 329-346 (IIFLIGIIVANVPEGLLA) form a helical membrane-spanning segment. The Cytoplasmic portion of the chain corresponds to 347-778 (TVTVCLTLTA…EEGRLIFDNL (432 aa)). Asp-384 serves as the catalytic 4-aspartylphosphate intermediate. Mg(2+) is bound by residues Asp-723 and Asp-727. Residues 779–798 (KKSIMYTLTSNIPEITPFLM) traverse the membrane as a helical segment. Residues 799-808 (FIILGIPLPL) are Extracellular-facing. Residues 809-829 (GTITILCIDLGTDMVPAISLA) form a helical membrane-spanning segment. At 830-849 (YESAESDIMKRLPRNPKTDN) the chain is on the cytoplasmic side. A helical membrane pass occupies residues 850–872 (LVNHRLIGMAYGQIGMIQALAGF). Over 873-924 (FTYFVILAENGFRPVDLLGIRLHWEDKYLNDLEDSYGQQWTYEQRKVVEFTC) the chain is Extracellular. The chain crosses the membrane as a helical span at residues 925–944 (QTAFFVTIVVVQWADLIISK). Over 945 to 957 (TRRNSLFQQGMRN) the chain is Cytoplasmic. Ser-949 is subject to Phosphoserine; by PKA. A helical membrane pass occupies residues 958-976 (KVLIFGILEETLLAAFLSY). At 977 to 991 (TPGMDVALRMYPLKI) the chain is on the extracellular side. The chain crosses the membrane as a helical span at residues 992–1012 (TWWLCAIPYSILIFVYDEIRK). Residues 1013–1029 (LLIRQHPDGWVERETYY) lie on the Cytoplasmic side of the membrane.

It belongs to the cation transport ATPase (P-type) (TC 3.A.3) family. Type IIC subfamily. In terms of assembly, the sodium/potassium-transporting ATPase is composed of a catalytic alpha subunit, an auxiliary non-catalytic beta subunit and an additional regulatory subunit. Specifically expressed in testis. Found in very low levels in skeletal muscle. Expressed in mature sperm (at protein level).

The protein resides in the cell membrane. The enzyme catalyses K(+)(out) + Na(+)(in) + ATP + H2O = K(+)(in) + Na(+)(out) + ADP + phosphate + H(+). With respect to regulation, specifically inhibited by an endogenous cardiac glycoside, ouabain. Its function is as follows. This is the catalytic component of the active enzyme, which catalyzes the hydrolysis of ATP coupled with the exchange of sodium and potassium ions across the plasma membrane. This action creates the electrochemical gradient of sodium and potassium ions, providing the energy for active transport of various nutrients. Plays a role in sperm motility. This Homo sapiens (Human) protein is Sodium/potassium-transporting ATPase subunit alpha-4.